We begin with the raw amino-acid sequence, 417 residues long: Probable tubulin polyglutamylase ttll-9 (417 aa).

The TTL domain occupies Gln-23–Glu-372. ATP is bound by residues Gln-188 to Val-191, Lys-201, and Asp-203.

Belongs to the tubulin--tyrosine ligase family. In terms of tissue distribution, expressed in head sensory neurons.

Its function is as follows. Polyglutamylase that forms polyglutamate side chains on tubulin. Acts when complexed with other proteins. Appears to be dispensable for polar spindle formation in dividing embryonic cells, for cilia-dependent osmotic avoidance and for male mating behavior. Probably by regulating microtubule stability via the glutamylation of tubulin, regulates PLM axon developmental growth. This is Probable tubulin polyglutamylase ttll-9 from Caenorhabditis elegans.